A 20-amino-acid chain; its full sequence is AVVFDPQPALWAEADTQLEP.

The disordered stretch occupies residues 1 to 20 (AVVFDPQPALWAEADTQLEP).

In terms of assembly, interacts with CRISP3. Post-translationally, glycosylated. As to expression, plasma.

It is found in the secreted. The polypeptide is Alpha-1B-glycoprotein (A1BG) (Equus asinus (Donkey)).